Here is a 343-residue protein sequence, read N- to C-terminus: Protein phosphatase 2C homolog 7, mitochondrial (343 aa).

The N-terminal 39 residues, 1 to 39 (MFANVGFRTLRVSRGPLYGSCSQIISFSKRTFYSSAKSG), are a transit peptide targeting the mitochondrion. In terms of domain architecture, PPM-type phosphatase spans 76-342 (IYQKLKDSIR…DDITVVVVRV (267 aa)). Mn(2+)-binding residues include aspartate 109, glycine 110, and aspartate 265.

Mg(2+) is required as a cofactor. Requires Mn(2+) as cofactor.

It localises to the mitochondrion. The catalysed reaction is O-phospho-L-seryl-[protein] + H2O = L-seryl-[protein] + phosphate. It carries out the reaction O-phospho-L-threonyl-[protein] + H2O = L-threonyl-[protein] + phosphate. In terms of biological role, protein phosphatase which positively regulates biosynthesis of the ubiquinone, coenzyme Q. Dephosphorylates and activates the ubiquinone biosynthesis protein CAT5/COQ7. Also dephosphorylates CIT1 on 'Ser-462', which leads to its activation. This chain is Protein phosphatase 2C homolog 7, mitochondrial (PTC7), found in Saccharomyces cerevisiae (strain ATCC 204508 / S288c) (Baker's yeast).